The sequence spans 326 residues: Tetraacyldisaccharide 4'-kinase (326 aa).

55-62 (TAGGNGKT) contributes to the ATP binding site.

This sequence belongs to the LpxK family.

It carries out the reaction a lipid A disaccharide + ATP = a lipid IVA + ADP + H(+). It participates in glycolipid biosynthesis; lipid IV(A) biosynthesis; lipid IV(A) from (3R)-3-hydroxytetradecanoyl-[acyl-carrier-protein] and UDP-N-acetyl-alpha-D-glucosamine: step 6/6. Its function is as follows. Transfers the gamma-phosphate of ATP to the 4'-position of a tetraacyldisaccharide 1-phosphate intermediate (termed DS-1-P) to form tetraacyldisaccharide 1,4'-bis-phosphate (lipid IVA). This Erwinia tasmaniensis (strain DSM 17950 / CFBP 7177 / CIP 109463 / NCPPB 4357 / Et1/99) protein is Tetraacyldisaccharide 4'-kinase.